Here is a 493-residue protein sequence, read N- to C-terminus: Glutamyl-tRNA(Gln) amidotransferase subunit A (493 aa).

Residues lysine 81 and serine 156 each act as charge relay system in the active site. Residue serine 180 is the Acyl-ester intermediate of the active site.

Belongs to the amidase family. GatA subfamily. In terms of assembly, heterotrimer of A, B and C subunits.

The catalysed reaction is L-glutamyl-tRNA(Gln) + L-glutamine + ATP + H2O = L-glutaminyl-tRNA(Gln) + L-glutamate + ADP + phosphate + H(+). Allows the formation of correctly charged Gln-tRNA(Gln) through the transamidation of misacylated Glu-tRNA(Gln) in organisms which lack glutaminyl-tRNA synthetase. The reaction takes place in the presence of glutamine and ATP through an activated gamma-phospho-Glu-tRNA(Gln). The polypeptide is Glutamyl-tRNA(Gln) amidotransferase subunit A (Mycobacterium avium (strain 104)).